The chain runs to 702 residues: MFENTKKALETFRTAIECVKCKKPRGDLQYLGSSCKHAYCWECIATFQQKPSGKRSSVARHMCPSCAFPLDTSKITEAHMLKTCFDTLSELNDLLQKVGTTSLTQAEFACTQNIFNKEKTPADAVEKFLETQAHMPDEMGQLGEEDDDLMCKDENRENSNSPELDIFHDYSKEASPTRNSTKRPSTVSVHERKPKRSSILKTSVKNEPAAPVVDLFASQVPQRTHQNDLLTPFIERRSTAPAATGVATYAQAFGSSSNPVKAEIIEEDIFSKAIPLTKRQASMSASAKKQPKLEPEEPEEVPSTSRSRKNSIKSDKIERRSQSPMSFGEKSMSVKSEQRRSSYGTRRGEAVLVNSIRNNRIPQLRSAVEAGTCVNEKEDGKTPLYVAVENSSLEAVKILVEAGAVINASCGSTLETTLHEAVRRQNTQIVEYLLSKGASIKIRNIAGKTVEEMAKSDPKIRKIIEKFKTEQRVLQPVVAPPKSRLHFVQLIDEKMLTESEKRKLPGKINIVPADMDSPTHVVVTVDLKTRVLNINKEHIGEILKAIIKSGMIVSRDWLRACIIDPSKVDDDRSYMVQKVRWMEGEVFENTIEQWKKTITKMQPKLFAGCKFFIPKPKYNFLDRPALFEIIRSAGGQAAAREPIIDEKDPPPYHNANLKPNFVLYSLTHDIGDKFRDCTKYNLVSEQWLIEAILGCSITTPPH.

The RING-type zinc-finger motif lies at cysteine 18–alanine 67. 2 disordered regions span residues aspartate 153–lysine 205 and alanine 281–arginine 346. Residues alanine 174–serine 188 are compositionally biased toward polar residues. The segment covering isoleucine 312–serine 321 has biased composition (basic and acidic residues). ANK repeat units lie at residues arginine 347–glutamate 376, aspartate 379–alanine 408, and threonine 413–isoleucine 442. Residues methionine 601–histidine 702 enclose the BRCT domain.

In terms of assembly, heterodimer (via RING-type zinc finger) with brc-1 to form the core CeBCD complex. Brc-1-brd-1 heterodimer-containing CeBCD complexes bound to chromatin are activated as an E3-ubiquitin ligase in response to DNA damage. The heterodimer interacts with the recombinase rad-51 following ionizing irradiation; the interaction is direct. The heterodimer interacts the E2-ubiquitin-conjugating enzyme let-70 following ionizing irradiation. The heterodimer interacts with the pro-crossover proteins msh-5 and syp-3. Interacts with smt-3, tac-1 and ubc-9. In terms of processing, autoubiquitinated. Post-translationally, phosphorylation of CeBCD complexes is required for E3 ubiquitin-protein ligase activity.

It localises to the cytoplasm. Its subcellular location is the nucleus. The protein localises to the chromosome. The enzyme catalyses S-ubiquitinyl-[E2 ubiquitin-conjugating enzyme]-L-cysteine + [acceptor protein]-L-lysine = [E2 ubiquitin-conjugating enzyme]-L-cysteine + N(6)-ubiquitinyl-[acceptor protein]-L-lysine.. It functions in the pathway protein modification; protein ubiquitination. Its activity is regulated as follows. E3 ubiquitin-protein ligase activity of CeBCD complexes occurs at DNA damage sites. Following DNA damage, E3 ubiquitin-protein ligase activity is reduced by caffeine treatment (inhibitor of ATM and ATK kinase activity). Its function is as follows. Constituent of the CeBCD complex that possesses E3 ubiquitin-protein ligase activity. When bound to chromatin, the brc-1-brd-1 heterodimer within the CeBCD complex is inactive during normal conditions, but in response to DNA damage, the brc-1-brd-1 heterodimer associates with other proteins such as the recombinase rad-51 or the E2-ubiquitin-conjugating enzyme let-70, which activate the CeBCD complex as an E3-ubiquitin ligase. Moreover, association between the brc-1-brd-1 heterodimer and rad-51 and let-70, probably requires DNA checkpoint proteins such as atl-1 and mre-11 in order to induce ubiquitination at DNA damage sites. To this end, the brc-1-brd-1 heterodimer coordinates a diverse range of cellular pathways such as DNA damage repair, ubiquitination and transcriptional regulation to maintain genomic stability. Plays a role in triggering cellular responses at damage sites in response to DNA damage that may be induced by ionizing radiation for example. In particular, protects against chromosome non-disjunction and nuclear fragmentation during meiotic double-strand break repair to ensure sister chromatid recombination and aid chromosome stability. This chain is BRCA1-associated RING domain protein 1, found in Caenorhabditis elegans.